The primary structure comprises 333 residues: Terpene synthase 2 (333 aa).

Residues 82 to 87 carry the DDxx(x)D/E motif motif; that stretch reads DDDLDT. The NDxxSxxxD/E motif motif lies at 219–227; it reads NDCVSYAKE.

Belongs to the terpene synthase family.

It catalyses the reaction (2E,6E)-farnesyl diphosphate = (E)-beta-farnesene + diphosphate. It carries out the reaction (2E,6E)-farnesyl diphosphate = (1S,2S,4R)-beta-elemene + diphosphate. Functionally, terpene synthase that converts its substrate farnesyl diphosphate (FPP) into the sesquiterpene (E)-beta-farnesene as major product. Is also able to convert FPP into delta-elemene, beta-elemene, (E)-beta-caryophyllene, 9-epi-(E)-caryophyllene, and a yet unidentified sesquiterpene. In Dictyostelium purpureum (Slime mold), this protein is Terpene synthase 2.